Reading from the N-terminus, the 195-residue chain is FMN-dependent NADH:quinone oxidoreductase 2 (195 aa).

Residues 16 to 18 (SVS) and 85 to 88 (MWNL) each bind FMN.

This sequence belongs to the azoreductase type 1 family. Homodimer. FMN is required as a cofactor.

It catalyses the reaction 2 a quinone + NADH + H(+) = 2 a 1,4-benzosemiquinone + NAD(+). The catalysed reaction is N,N-dimethyl-1,4-phenylenediamine + anthranilate + 2 NAD(+) = 2-(4-dimethylaminophenyl)diazenylbenzoate + 2 NADH + 2 H(+). Its function is as follows. Quinone reductase that provides resistance to thiol-specific stress caused by electrophilic quinones. Functionally, also exhibits azoreductase activity. Catalyzes the reductive cleavage of the azo bond in aromatic azo compounds to the corresponding amines. In Photobacterium profundum (strain SS9), this protein is FMN-dependent NADH:quinone oxidoreductase 2.